We begin with the raw amino-acid sequence, 416 residues long: Casein kinase I isoform epsilon (416 aa).

In terms of domain architecture, Protein kinase spans 9-277 (YRLGRKIGSG…YLRQLFRNLF (269 aa)). Residues 15 to 23 (IGSGSFGDI) and Lys-38 contribute to the ATP site. The Proton acceptor role is filled by Asp-128. Positions 301–318 (PEDMDRERREHEREERMG) are enriched in basic and acidic residues. Positions 301-416 (PEDMDRERRE…TSVPFDHLGK (116 aa)) are disordered. A compositionally biased stretch (low complexity) spans 324–338 (ATRALPPGPPAGATG). Composition is skewed to polar residues over residues 350 to 365 (STPTSRIQQSGNTSPR) and 400 to 409 (SRISASQTSV).

The protein belongs to the protein kinase superfamily. CK1 Ser/Thr protein kinase family. Casein kinase I subfamily. As to quaternary structure, monomer. Component of the circadian core oscillator, which includes the CRY proteins, CLOCK, or NPAS2, BMAL1 or BMAL2, CSNK1E, and the PER proteins.

Its subcellular location is the cytoplasm. It catalyses the reaction L-seryl-[protein] + ATP = O-phospho-L-seryl-[protein] + ADP + H(+). The enzyme catalyses L-threonyl-[protein] + ATP = O-phospho-L-threonyl-[protein] + ADP + H(+). Casein kinases are operationally defined by their preferential utilization of acidic proteins such as caseins as substrates. Can phosphorylate a large number of proteins. Participates in Wnt signaling. Phosphorylates DVL1. Central component of the circadian clock. May act as a negative regulator of circadian rhythmicity by phosphorylating PER1 and PER2. Retains PER1 in the cytoplasm. The polypeptide is Casein kinase I isoform epsilon (CSNK1E) (Gallus gallus (Chicken)).